A 497-amino-acid polypeptide reads, in one-letter code: Putative diacyglycerol O-acyltransferase Rv3480c (497 aa).

The active-site Proton acceptor is His-143.

Belongs to the long-chain O-acyltransferase family.

The catalysed reaction is an acyl-CoA + a 1,2-diacyl-sn-glycerol = a triacyl-sn-glycerol + CoA. It catalyses the reaction di-(9Z)-octadecenoylglycerol + (9Z)-octadecenoyl-CoA = 1,2,3-tri-(9Z-octadecenoyl)-glycerol + CoA. It carries out the reaction hexadecan-1-ol + hexadecanoyl-CoA = hexadecanyl hexadecanoate + CoA. It participates in glycerolipid metabolism; triacylglycerol biosynthesis. Its function is as follows. Upon expression in E.coli has a weak triacylglycerol synthase function, making triacylglycerol (TG) from diolein and long-chain fatty acyl-CoA. Also functions weakly as a wax synthase, as it incorporates palmityl alcohol into wax esters in the presence of palmitoyl-CoA. The sequence is that of Putative diacyglycerol O-acyltransferase Rv3480c from Mycobacterium tuberculosis (strain ATCC 25618 / H37Rv).